A 463-amino-acid polypeptide reads, in one-letter code: Major capsid protein (463 aa).

It belongs to the NCLDV major capsid protein family. In terms of assembly, homotrimer.

The protein localises to the virion. Its function is as follows. Major capsid protein that self assembles to form an icosahedral capsid. Represents around 50% of the total virion protein mass. The protein is Major capsid protein (MCP) of Rana tigrina ranavirus.